Reading from the N-terminus, the 63-residue chain is Large ribosomal subunit protein bL28 (63 aa).

Belongs to the bacterial ribosomal protein bL28 family.

This chain is Large ribosomal subunit protein bL28, found in Acidobacterium capsulatum (strain ATCC 51196 / DSM 11244 / BCRC 80197 / JCM 7670 / NBRC 15755 / NCIMB 13165 / 161).